We begin with the raw amino-acid sequence, 957 residues long: Glutamyl aminopeptidase (957 aa).

At 1-18 the chain is on the cytoplasmic side; it reads MNFAEREGSKRYCIQTKH. A helical; Signal-anchor for type II membrane protein membrane pass occupies residues 19-39; the sequence is VAILCAVVVGVGLIVGLAVGL. Residues 40-957 are Extracellular-facing; it reads TRSCDSSGDG…EWFFNLLESG (918 aa). Residues 44–83 form a disordered region; it reads DSSGDGGPGTAPAPSHLPSSTASPSGPPAQDQDICPASED. Asparagine 98 carries an N-linked (GlcNAc...) asparagine; atypical glycan. Asparagine 124 and asparagine 197 each carry an N-linked (GlcNAc...) asparagine glycan. Glutamate 223 is a binding site for substrate. Asparagine 324 and asparagine 340 each carry an N-linked (GlcNAc...) asparagine glycan. 357 to 361 serves as a coordination point for substrate; that stretch reads GAMEN. Position 393 (histidine 393) interacts with Zn(2+). Glutamate 394 functions as the Proton acceptor in the catalytic mechanism. Zn(2+) is bound by residues histidine 397 and glutamate 416. N-linked (GlcNAc...) asparagine glycosylation is found at asparagine 554, asparagine 589, asparagine 597, asparagine 607, asparagine 678, asparagine 763, asparagine 773, asparagine 801, and asparagine 828. Arginine 887 lines the substrate pocket.

It belongs to the peptidase M1 family. As to quaternary structure, homodimer; disulfide-linked. It depends on Zn(2+) as a cofactor. Expressed in choriocarcinoma cancer cell lines (at protein level). Expressed by epithelial cells of the proximal tubule cells and the glomerulus of the nephron. Also found in a variety of other tissues.

Its subcellular location is the cell membrane. The enzyme catalyses Release of N-terminal glutamate (and to a lesser extent aspartate) from a peptide.. With respect to regulation, substrate specificity is modulated by calcium which enhances the enzymatic activity for cleavage of acidic residues while reducing its activity with basic residues. Inhibited by aminopeptidase inhibitors amastatin and bestatin. Regulates central hypertension through its calcium-modulated preference to cleave N-terminal acidic residues from peptides such as angiotensin II. This Homo sapiens (Human) protein is Glutamyl aminopeptidase (ENPEP).